Consider the following 103-residue polypeptide: Protein E7 (103 aa).

Residues 1–45 (MIGKEVTVRDIVLELSEVQPEVLPVDLFCDEELPNEQQAEEELDI) form an E7 terminal domain region. The LXCXE motif; interaction with host RB1 and TMEM173/STING signature appears at 27–31 (LFCDE). The segment at 56-94 (CGCSCCEVKLRIFVNATNRGIRTFQELLTGDLQLLCPEC) is a zinc-finger region. A Nuclear export signal motif is present at residues 76-84 (IRTFQELLT).

Belongs to the papillomaviridae E7 protein family. Homodimer. Homooligomer. Interacts with host RB1; this interaction induces dissociation of RB1-E2F1 complex thereby disrupting RB1 activity. Interacts with host EP300; this interaction represses EP300 transcriptional activity. Interacts with protein E2; this interaction inhibits E7 oncogenic activity. Interacts with host TMEM173/STING; this interaction impairs the ability of TMEM173/STING to sense cytosolic DNA and promote the production of type I interferon (IFN-alpha and IFN-beta). In terms of processing, highly phosphorylated.

It localises to the host cytoplasm. It is found in the host nucleus. Functionally, plays a role in viral genome replication by driving entry of quiescent cells into the cell cycle. Stimulation of progression from G1 to S phase allows the virus to efficiently use the cellular DNA replicating machinery to achieve viral genome replication. E7 protein has both transforming and trans-activating activities. Induces the disassembly of the E2F1 transcription factor from RB1, with subsequent transcriptional activation of E2F1-regulated S-phase genes. Interferes with host histone deacetylation mediated by HDAC1 and HDAC2, leading to transcription activation. Also plays a role in the inhibition of both antiviral and antiproliferative functions of host interferon alpha. Interaction with host TMEM173/STING impairs the ability of TMEM173/STING to sense cytosolic DNA and promote the production of type I interferon (IFN-alpha and IFN-beta). The chain is Protein E7 from Homo sapiens (Human).